Consider the following 166-residue polypeptide: Phosphopantetheine adenylyltransferase (166 aa).

S11 is a substrate binding site. Residues 11 to 12 (SF) and H19 contribute to the ATP site. Residues K43, L75, and R89 each coordinate substrate. ATP-binding positions include 90–92 (GLR), E100, and 125–131 (YGYLSSS).

The protein belongs to the bacterial CoaD family. In terms of assembly, homohexamer. Requires Mg(2+) as cofactor.

It is found in the cytoplasm. The enzyme catalyses (R)-4'-phosphopantetheine + ATP + H(+) = 3'-dephospho-CoA + diphosphate. It participates in cofactor biosynthesis; coenzyme A biosynthesis; CoA from (R)-pantothenate: step 4/5. Functionally, reversibly transfers an adenylyl group from ATP to 4'-phosphopantetheine, yielding dephospho-CoA (dPCoA) and pyrophosphate. In Syntrophotalea carbinolica (strain DSM 2380 / NBRC 103641 / GraBd1) (Pelobacter carbinolicus), this protein is Phosphopantetheine adenylyltransferase.